The sequence spans 505 residues: OVARIAN TUMOR DOMAIN-containing deubiquitinating enzyme 6 (505 aa).

Residues 1–191 (MTRILVQRGS…NSSDEHMPCY (191 aa)) are disordered. Low complexity predominate over residues 9–30 (GSSGSSSNSSRPSSSSSSSSGS). The span at 51–72 (DEKQEEVTVVEKAECSDAKDVA) shows a compositional bias: basic and acidic residues. The segment covering 73–86 (VDSDEPADREDDEG) has biased composition (acidic residues). Pro residues predominate over residues 115–124 (PPVPAPPPKP). Over residues 159–173 (SSRSSPTGSHPSSPR) the composition is skewed to low complexity. Residues 174-188 (SHSENEGYNSSDEHM) are compositionally biased toward basic and acidic residues. In terms of domain architecture, OTU spans 216–339 (FEIRRMLEDG…GNHYNSLVDP (124 aa)). Asp224 is a catalytic residue. Cys227 serves as the catalytic Nucleophile. His332 is an active-site residue. The interval 416-447 (RIGPKESSTSNAETSSSGARPSGSDSKPAEAV) is disordered. The segment covering 421–441 (ESSTSNAETSSSGARPSGSDS) has biased composition (low complexity). Residues 446 to 491 (AVKEKTVLSSSIEMVLSMGFSYAQAMEAYSIFGDDVDSMVCYVLET) form the UBA domain.

It belongs to the peptidase C85 family. As to quaternary structure, interacts with KDM1C. Mostly expressed in stems flowers and siliques, and, to a lower extent, in leaves, roots and seedlings.

The protein localises to the nucleus. It is found in the cytoplasm. The enzyme catalyses Thiol-dependent hydrolysis of ester, thioester, amide, peptide and isopeptide bonds formed by the C-terminal Gly of ubiquitin (a 76-residue protein attached to proteins as an intracellular targeting signal).. In terms of biological role, hydrolase that can remove conjugated ubiquitin from proteins in vitro and may therefore play an important regulatory role at the level of protein turnover by preventing degradation. Binds chromatin (e.g. nucleosomes and histones) and has enzymatic histone deubiquitinase activity, specific for the H2B histone. Can both repress (e.g. OSR2) and promote (e.g. AN3) the expression of target genes by associating with chromatin, deubiquitinating H2B and regulating its euchromatic histone marks (e.g. H3ac and H3K4me). In association with LDL1/KDM1C, involved in transcriptional gene repression via histone deubiquitination and demethylation. Promotes the concerted epigenetic regulation and repression (e.g. the removal of euchromatic histone acetylation, ubiquitination, and methylation marks) of a set of genes (e.g. GA20OX, WUS, OSR2, ARL and ABI5) that collectively limit plant growth thus stimulating plant growth and increasing cell size. This chain is OVARIAN TUMOR DOMAIN-containing deubiquitinating enzyme 6, found in Arabidopsis thaliana (Mouse-ear cress).